A 335-amino-acid chain; its full sequence is Pyridoxal 5'-phosphate synthase subunit PdxS (335 aa).

Asp30 lines the D-ribose 5-phosphate pocket. Lys87 functions as the Schiff-base intermediate with D-ribose 5-phosphate in the catalytic mechanism. Position 159 (Gly159) interacts with D-ribose 5-phosphate. Arg171 serves as a coordination point for D-glyceraldehyde 3-phosphate. D-ribose 5-phosphate-binding positions include Gly257 and Gly278–Ser279.

It belongs to the PdxS/SNZ family. As to quaternary structure, in the presence of PdxT, forms a dodecamer of heterodimers.

The catalysed reaction is aldehydo-D-ribose 5-phosphate + D-glyceraldehyde 3-phosphate + L-glutamine = pyridoxal 5'-phosphate + L-glutamate + phosphate + 3 H2O + H(+). It functions in the pathway cofactor biosynthesis; pyridoxal 5'-phosphate biosynthesis. Catalyzes the formation of pyridoxal 5'-phosphate from ribose 5-phosphate (RBP), glyceraldehyde 3-phosphate (G3P) and ammonia. The ammonia is provided by the PdxT subunit. Can also use ribulose 5-phosphate and dihydroxyacetone phosphate as substrates, resulting from enzyme-catalyzed isomerization of RBP and G3P, respectively. This is Pyridoxal 5'-phosphate synthase subunit PdxS from Thermococcus kodakarensis (strain ATCC BAA-918 / JCM 12380 / KOD1) (Pyrococcus kodakaraensis (strain KOD1)).